A 1024-amino-acid polypeptide reads, in one-letter code: RNA cytidine acetyltransferase (1024 aa).

287–296 (GRGKSAALGL) contacts ATP. An N6-acetyllysine modification is found at Lys-426. Arg-470 serves as a coordination point for ATP. Positions 558 to 753 (CLLPPVPPTQ…HSCIMLKTLA (196 aa)) constitute an N-acetyltransferase domain. Residues 629–631 (IAV) and 636–642 (QGMGYGS) each bind acetyl-CoA. The segment at 702–1024 (PAERLDYLGV…RKDMKLKRKK (323 aa)) is required for localization to the nucleolus and midbody. A Phosphothreonine modification is found at Thr-716. Acetyl-CoA is bound at residue Arg-725. Ser-934, Ser-984, and Ser-987 each carry phosphoserine. Residues 990–1024 (SDKKRKLETKQEPKQSKKLKKRDNNRKDMKLKRKK) are disordered. Residues 1005 to 1024 (SKKLKKRDNNRKDMKLKRKK) show a composition bias toward basic residues.

It belongs to the RNA cytidine acetyltransferase family. NAT10 subfamily. In terms of assembly, part of the small subunit (SSU) processome, composed of more than 70 proteins and the RNA chaperone small nucleolar RNA (snoRNA) U3. Interacts with THUMPD1. Interacts with SUN1 (via N-terminus). Interacts with TERT.

Its subcellular location is the nucleus. It localises to the nucleolus. The catalysed reaction is a cytidine in 18S rRNA + acetyl-CoA + ATP + H2O = an N(4)-acetylcytidine in 18S rRNA + ADP + phosphate + CoA + H(+). It carries out the reaction a cytidine in tRNA + acetyl-CoA + ATP + H2O = an N(4)-acetylcytidine in tRNA + ADP + phosphate + CoA + H(+). It catalyses the reaction a cytidine in mRNA + acetyl-CoA + ATP + H2O = an N(4)-acetylcytidine in mRNA + ADP + phosphate + CoA + H(+). Functionally, RNA cytidine acetyltransferase that catalyzes the formation of N(4)-acetylcytidine (ac4C) modification on mRNAs, 18S rRNA and tRNAs. Catalyzes ac4C modification of a broad range of mRNAs, enhancing mRNA stability and translation. mRNA ac4C modification is frequently present within wobble cytidine sites and promotes translation efficiency. Mediates the formation of ac4C at position 1842 in 18S rRNA. May also catalyze the formation of ac4C at position 1337 in 18S rRNA. Required for early nucleolar cleavages of precursor rRNA at sites A0, A1 and A2 during 18S rRNA synthesis. Catalyzes the formation of ac4C in serine and leucine tRNAs. Requires the tRNA-binding adapter protein THUMPD1 for full tRNA acetyltransferase activity but not for 18S rRNA acetylation. In addition to RNA acetyltransferase activity, also able to acetylate lysine residues of proteins, such as histones, microtubules, p53/TP53 and MDM2, in vitro. The relevance of the protein lysine acetyltransferase activity is however unsure in vivo. Activates telomerase activity by stimulating the transcription of TERT, and may also regulate telomerase function by affecting the balance of telomerase subunit assembly, disassembly, and localization. Involved in the regulation of centrosome duplication by acetylating CENATAC during mitosis, promoting SASS6 proteasome degradation. Part of the small subunit (SSU) processome, first precursor of the small eukaryotic ribosomal subunit. During the assembly of the SSU processome in the nucleolus, many ribosome biogenesis factors, an RNA chaperone and ribosomal proteins associate with the nascent pre-rRNA and work in concert to generate RNA folding, modifications, rearrangements and cleavage as well as targeted degradation of pre-ribosomal RNA by the RNA exosome. The sequence is that of RNA cytidine acetyltransferase from Mus musculus (Mouse).